Reading from the N-terminus, the 214-residue chain is Ribosomal RNA small subunit methyltransferase G (214 aa).

S-adenosyl-L-methionine contacts are provided by residues G81, M86, 132–133 (VE), and R147.

Belongs to the methyltransferase superfamily. RNA methyltransferase RsmG family.

The protein resides in the cytoplasm. The catalysed reaction is guanosine(527) in 16S rRNA + S-adenosyl-L-methionine = N(7)-methylguanosine(527) in 16S rRNA + S-adenosyl-L-homocysteine. In terms of biological role, specifically methylates the N7 position of guanine in position 527 of 16S rRNA. The sequence is that of Ribosomal RNA small subunit methyltransferase G from Pseudomonas aeruginosa (strain UCBPP-PA14).